We begin with the raw amino-acid sequence, 186 residues long: Peptide deformylase (186 aa).

Cys-99 and His-141 together coordinate Fe cation. Residue Glu-142 is part of the active site. Fe cation is bound at residue His-145.

It belongs to the polypeptide deformylase family. It depends on Fe(2+) as a cofactor.

The catalysed reaction is N-terminal N-formyl-L-methionyl-[peptide] + H2O = N-terminal L-methionyl-[peptide] + formate. Its function is as follows. Removes the formyl group from the N-terminal Met of newly synthesized proteins. Requires at least a dipeptide for an efficient rate of reaction. N-terminal L-methionine is a prerequisite for activity but the enzyme has broad specificity at other positions. The chain is Peptide deformylase from Chlamydia pneumoniae (Chlamydophila pneumoniae).